The primary structure comprises 849 residues: Putative pentatricopeptide repeat-containing protein At5g08490 (849 aa).

PPR repeat units lie at residues 20 to 54 (DHRV…GHIA), 55 to 89 (CSEV…DPVV), 121 to 155 (SSVT…GLEK), 156 to 187 (DTLV…IADK), 188 to 222 (DVVS…PTEP), 223 to 260 (NYAT…SWLQ), 262 to 296 (HVFV…DLVS), 297 to 327 (WNVV…GDVS), 329 to 363 (DSVT…SYLL), 365 to 399 (DTSV…DIIS), 400 to 430 (WNAI…AITL), 431 to 465 (DSVT…GLLH), 469 to 499 (EPKL…LSER), 501 to 531 (TLVS…MSTT), 532 to 566 (DLTT…GMRP), 567 to 597 (NTVT…IIRG), 601 to 631 (DIRL…DARR), 632 to 666 (DLVM…NIKP), 667 to 702 (DHVF…GMKP), and 703 to 733 (TMEQ…MPVE). The segment at 738–813 (IWGTLLRACT…PAGCSWLEVD (76 aa)) is type E motif. The type E(+) motif stretch occupies residues 814-844 (GQRNVFVSGDCSHPRRDSIFDLVNALYLQMK).

Belongs to the PPR family. PCMP-E subfamily.

In Arabidopsis thaliana (Mouse-ear cress), this protein is Putative pentatricopeptide repeat-containing protein At5g08490 (PCMP-E32).